The chain runs to 206 residues: Delta and osm-11 homolog protein 1 (206 aa).

This Caenorhabditis elegans protein is Delta and osm-11 homolog protein 1 (dos-1).